A 555-amino-acid polypeptide reads, in one-letter code: Membrane protein insertase YidC (555 aa).

The chain crosses the membrane as a helical span at residues 7 to 24; that stretch reads ILWVIFSMSLVLLYDNWQ. Residues 62–81 form a disordered region; that stretch reads APGAAGTAAPAAPQAAAQPT. The next 5 membrane-spanning stretches (helical) occupy residues 334–354, 360–380, 430–450, 468–488, and 503–523; these read LELV…FWLL, FLGN…LVFF, LGGC…YWVL, LSVP…MFVQ, and VMMI…AGLV.

It belongs to the OXA1/ALB3/YidC family. Type 1 subfamily. Interacts with the Sec translocase complex via SecD. Specifically interacts with transmembrane segments of nascent integral membrane proteins during membrane integration.

Its subcellular location is the cell inner membrane. Functionally, required for the insertion and/or proper folding and/or complex formation of integral membrane proteins into the membrane. Involved in integration of membrane proteins that insert both dependently and independently of the Sec translocase complex, as well as at least some lipoproteins. Aids folding of multispanning membrane proteins. The polypeptide is Membrane protein insertase YidC (Cupriavidus necator (strain ATCC 17699 / DSM 428 / KCTC 22496 / NCIMB 10442 / H16 / Stanier 337) (Ralstonia eutropha)).